The chain runs to 1160 residues: Protein translocase subunit SecA (1160 aa).

ATP-binding positions include Gln162 and 180 to 184 (GEGKT). The interval 342–362 (LLEEKEEAEEEGDSRRAQELE) is disordered. Residues 344 to 353 (EEKEEAEEEG) show a composition bias toward acidic residues. Asp726 serves as a coordination point for ATP. Positions 1060 to 1134 (EVQTEGQGPR…RNEYVTVRNN (75 aa)) are disordered. Positions 1074–1083 (QRNAQTQHDS) are enriched in polar residues. The span at 1104–1115 (AAERDPTVEEKQ) shows a compositional bias: basic and acidic residues.

It belongs to the SecA family. In terms of assembly, monomer and homodimer. Part of the essential Sec protein translocation apparatus which comprises SecA, SecYEG and auxiliary proteins SecDF. Other proteins may also be involved.

The protein localises to the cell inner membrane. Its subcellular location is the cytoplasm. It catalyses the reaction ATP + H2O + cellular proteinSide 1 = ADP + phosphate + cellular proteinSide 2.. Part of the Sec protein translocase complex. Interacts with the SecYEG preprotein conducting channel. Has a central role in coupling the hydrolysis of ATP to the transfer of proteins into and across the cell membrane, serving as an ATP-driven molecular motor driving the stepwise translocation of polypeptide chains across the membrane. In Salinibacter ruber (strain DSM 13855 / M31), this protein is Protein translocase subunit SecA.